Consider the following 368-residue polypeptide: 3-dehydroquinate synthase (368 aa).

NAD(+) is bound by residues 112–116 (GVVGD), 136–137 (TT), K149, K158, and 176–179 (FLDT). E191, H257, and H274 together coordinate Zn(2+).

This sequence belongs to the sugar phosphate cyclases superfamily. Dehydroquinate synthase family. It depends on Co(2+) as a cofactor. Zn(2+) serves as cofactor. Requires NAD(+) as cofactor.

The protein localises to the cytoplasm. It catalyses the reaction 7-phospho-2-dehydro-3-deoxy-D-arabino-heptonate = 3-dehydroquinate + phosphate. It functions in the pathway metabolic intermediate biosynthesis; chorismate biosynthesis; chorismate from D-erythrose 4-phosphate and phosphoenolpyruvate: step 2/7. Catalyzes the conversion of 3-deoxy-D-arabino-heptulosonate 7-phosphate (DAHP) to dehydroquinate (DHQ). In Natranaerobius thermophilus (strain ATCC BAA-1301 / DSM 18059 / JW/NM-WN-LF), this protein is 3-dehydroquinate synthase.